Reading from the N-terminus, the 241-residue chain is Ribonuclease HII (241 aa).

Residues asparagine 57 to glycine 241 enclose the RNase H type-2 domain. The a divalent metal cation site is built by aspartate 63, glutamate 64, and aspartate 155.

Belongs to the RNase HII family. Requires Mn(2+) as cofactor. Mg(2+) serves as cofactor.

The protein resides in the cytoplasm. The enzyme catalyses Endonucleolytic cleavage to 5'-phosphomonoester.. Endonuclease that specifically degrades the RNA of RNA-DNA hybrids. The sequence is that of Ribonuclease HII from Caldanaerobacter subterraneus subsp. tengcongensis (strain DSM 15242 / JCM 11007 / NBRC 100824 / MB4) (Thermoanaerobacter tengcongensis).